A 1084-amino-acid chain; its full sequence is Transcription elongation factor SPT5 (1084 aa).

Residues 1-91 (MSDSEDSDFS…DDEYEDEDPW (91 aa)) are disordered. Acidic residues-rich tracts occupy residues 20-32 (AEEV…EEEQ), 41-62 (AEEE…EEDD), and 77-91 (DEAD…EDPW). Positions 175–269 (DPNLWTVKCK…TDVLKVVKEV (95 aa)) are interaction with SUPT4H1. KOW domains are found at residues 272-305 (LKPK…ISLK), 419-450 (LQAG…ITIM), 471-502 (FRMG…VILF), and 593-626 (IHVK…LHCK). An interaction with RNA polymerase II region spans residues 312-419 (LDRIKARMSM…TTGKEREHNL (108 aa)). Ser-665 is modified (phosphoserine). The disordered stretch occupies residues 667–700 (RISSPMHPGGGGQPQRGGGGGGGGGMGRGRGRRD). The segment covering 674–694 (PGGGGQPQRGGGGGGGGGMGR) has biased composition (gly residues). Residues 702–735 (DLIGQTVRISQGPYKGYIGVVKDATESTARVELH) form the KOW 5 domain. Residues 748–973 (LTTVGGKERQ…HTPGSNIDQA (226 aa)) are disordered. One copy of the CTR1-1; approximate repeat lies at 758-763 (GRSSTH). Residues 758 to 815 (GRSSTHLRTPMYGSQTPIYGTGSRTPMYGSQTPLHDGSRTPHYGSQTPLHDGSRTPGQ) form an 8 X 7 AA approximate tandem repeats of G-S-[QR]-T-P-X-[YQ], motif CTR1 region. Polar residues predominate over residues 759–790 (RSSTHLRTPMYGSQTPIYGTGSRTPMYGSQTP). Residues 764 to 769 (LRTPMY) form a CTR1-2; approximate repeat. The stretch at 770–776 (GSQTPIY) is one CTR1-3 repeat. Phosphothreonine; by CDK9 is present on residues Thr-773 and Thr-782. The stretch at 779-785 (GSRTPMY) is one CTR1-4 repeat. A CTR1-5 repeat occupies 786–792 (GSQTPLH). The CTR1-6 repeat unit spans residues 794 to 800 (GSRTPHY). The CTR1-7 repeat unit spans residues 801 to 807 (GSQTPLH). A CTR1-8 repeat occupies 809–815 (GSRTPGQ). Residues 832–842 (DEYEFAYDDEP) are compositionally biased toward acidic residues. The CTR2-1 repeat unit spans residues 842–849 (PSPSPQGY). The 10 X 8 AA approximate tandem repeats of P-[TS]-P-S-P-[QA]-[SG]-Y, motif CTR2 stretch occupies residues 842-948 (PSPSPQGYGG…ASPSPSPVGY (107 aa)). A CTR2-2; approximate repeat occupies 852 to 860 (TPNPQTPGY). The span at 855 to 864 (PQTPGYPEVP) shows a compositional bias: pro residues. The stretch at 861 to 867 (PEVPSPQ) is one CTR2-3; approximate repeat. The segment covering 866-888 (PQVNPQYNPQTPGTPAMYNTDQY) has biased composition (polar residues). The CTR2-4; half-length repeat unit spans residues 879-883 (TPAMY). One copy of the CTR2-5; approximate repeat lies at 894-900 (PSPQGSY). The segment covering 894–909 (PSPQGSYQPSPSPQSY) has biased composition (low complexity). One copy of the CTR2-6 repeat lies at 902 to 909 (PSPSPQSY). The stretch at 914-919 (PSPVGY) is one CTR2-7; approximate repeat. Residues 922-928 (THSPASY) form a CTR2-8 repeat. Residues 930–937 (PTPSPMAY) form a CTR2-9 repeat. The CTR2-10 repeat unit spans residues 941-948 (PSPSPVGY).

This sequence belongs to the SPT5 family. Interacts with SUPT4H1 to form the DSIF complex. DSIF interacts with RNA polymerase II and with the positive transcription elongation factor b complex (P-TEFb complex), which is composed of CDK9 and cyclin-T. Post-translationally, phosphorylated. Phosphorylation by P-TEFb (CDK9) at Thr residues of the C-terminal repeats alleviates transcriptional pausing and promotes transcription elongation.

It is found in the nucleus. Functionally, component of the DRB sensitivity-inducing factor complex (DSIF complex), which regulates mRNA processing and transcription elongation by RNA polymerase II. DSIF positively regulates mRNA capping by stimulating the mRNA guanylyltransferase activity of RNGTT/CAP1A. DSIF also acts cooperatively with the negative elongation factor complex (NELF complex) to enhance transcriptional pausing at sites proximal to the promoter. Transcriptional pausing may facilitate the assembly of an elongation competent RNA polymerase II complex. DSIF and NELF promote pausing by inhibition of the transcription elongation factor TFIIS/S-II. TFIIS/S-II binds to RNA polymerase II at transcription pause sites and stimulates the weak intrinsic nuclease activity of the enzyme. Cleavage of blocked transcripts by RNA polymerase II promotes the resumption of transcription from the new 3' terminus and may allow repeated attempts at transcription through natural pause sites. Following phosphorylation by CDK9, DSIF can also positively regulate transcriptional elongation. Regulation of transcriptional elongation by this protein is required for the expression of genes which control neuronal development. This chain is Transcription elongation factor SPT5 (supt5h), found in Danio rerio (Zebrafish).